We begin with the raw amino-acid sequence, 279 residues long: Tryptophan 2,3-dioxygenase (279 aa).

Substrate contacts are provided by residues 48 to 52, Tyr110, and Arg114; that span reads FIVIH. Position 237 (His237) interacts with heme. Thr251 is a substrate binding site.

The protein belongs to the tryptophan 2,3-dioxygenase family. In terms of assembly, homotetramer. Requires heme as cofactor.

It carries out the reaction L-tryptophan + O2 = N-formyl-L-kynurenine. It functions in the pathway amino-acid degradation; L-tryptophan degradation via kynurenine pathway; L-kynurenine from L-tryptophan: step 1/2. Its function is as follows. Heme-dependent dioxygenase that catalyzes the oxidative cleavage of the L-tryptophan (L-Trp) pyrrole ring and converts L-tryptophan to N-formyl-L-kynurenine. Catalyzes the oxidative cleavage of the indole moiety. This Bacillus thuringiensis subsp. konkukian (strain 97-27) protein is Tryptophan 2,3-dioxygenase.